The sequence spans 178 residues: Protein GrpE (178 aa).

This sequence belongs to the GrpE family. Homodimer.

It localises to the cytoplasm. Participates actively in the response to hyperosmotic and heat shock by preventing the aggregation of stress-denatured proteins, in association with DnaK and GrpE. It is the nucleotide exchange factor for DnaK and may function as a thermosensor. Unfolded proteins bind initially to DnaJ; upon interaction with the DnaJ-bound protein, DnaK hydrolyzes its bound ATP, resulting in the formation of a stable complex. GrpE releases ADP from DnaK; ATP binding to DnaK triggers the release of the substrate protein, thus completing the reaction cycle. Several rounds of ATP-dependent interactions between DnaJ, DnaK and GrpE are required for fully efficient folding. The polypeptide is Protein GrpE (Rickettsia prowazekii (strain Madrid E)).